Reading from the N-terminus, the 753-residue chain is ATPase family gene 2 protein homolog B (753 aa).

At methionine 1 the chain carries N-acetylmethionine. The tract at residues methionine 1–glutamate 189 is required for interaction with AFG2A and CINP. A disordered region spans residues serine 171 to glycine 203. ATP is bound by residues glycine 241–threonine 248 and glycine 505–threonine 512.

It belongs to the AAA ATPase family. AFG2 subfamily. Part of the 55LCC heterohexameric ATPase complex composed at least of AIRIM, AFG2A, AFG2B and CINP. Associates with pre-60S ribosomal particles. As to expression, expressed in both neurons and glia during embryonic and adult stages of brain development.

The protein resides in the cytoplasm. It is found in the cytoskeleton. Its subcellular location is the spindle. It localises to the nucleus. The enzyme catalyses ATP + H2O = ADP + phosphate + H(+). In the context of 55LCC heterohexameric ATPase complex, the ATPase activity is stimulated by DNA binding and inhibited in presence of RNA. ATP-dependent chaperone part of the 55LCC heterohexameric ATPase complex which is chromatin-associated and promotes replisome proteostasis to maintain replication fork progression and genome stability. Required for replication fork progression, sister chromatid cohesion, and chromosome stability. The ATPase activity is specifically enhanced by replication fork DNA and is coupled to cysteine protease-dependent cleavage of replisome substrates in response to replication fork damage. Uses ATPase activity to process replisome substrates in S-phase, facilitating their proteolytic turnover from chromatin to ensure DNA replication and mitotic fidelity. Plays an essential role in the cytoplasmic maturation steps of pre-60S ribosomal particles by promoting the release of shuttling protein RSL24D1/RLP24 from the pre-ribosomal particles. In Homo sapiens (Human), this protein is ATPase family gene 2 protein homolog B.